We begin with the raw amino-acid sequence, 238 residues long: Ribonuclease 3 (238 aa).

The 124-residue stretch at 17–140 (YATLEKALGY…LMAGVYLEAG (124 aa)) folds into the RNase III domain. A Mg(2+)-binding site is contributed by glutamate 53. Aspartate 57 is a catalytic residue. Serine 126 and glutamate 129 together coordinate Mg(2+). Glutamate 129 is an active-site residue. The DRBM domain maps to 167-236 (DYKTALQELT…AYQALQKLKE (70 aa)).

It belongs to the ribonuclease III family. As to quaternary structure, homodimer. Mg(2+) serves as cofactor.

The protein localises to the cytoplasm. It carries out the reaction Endonucleolytic cleavage to 5'-phosphomonoester.. Digests double-stranded RNA. Involved in the processing of primary rRNA transcript to yield the immediate precursors to the large and small rRNAs (23S and 16S). Processes some mRNAs, and tRNAs when they are encoded in the rRNA operon. Processes pre-crRNA and tracrRNA of type II CRISPR loci if present in the organism. In Helicobacter pylori (strain Shi470), this protein is Ribonuclease 3.